Reading from the N-terminus, the 165-residue chain is UPF0178 protein Bphyt_5655 (165 aa).

Disordered regions lie at residues 115–134 (LRGS…RDSK) and 139–165 (ELDR…PPTE).

Belongs to the UPF0178 family.

This chain is UPF0178 protein Bphyt_5655, found in Paraburkholderia phytofirmans (strain DSM 17436 / LMG 22146 / PsJN) (Burkholderia phytofirmans).